We begin with the raw amino-acid sequence, 80 residues long: Protein pegasus (80 aa).

The first 22 residues, 1-22 (MKLSAVLLAIALLALSLVQCLG), serve as a signal peptide directing secretion. The Kazal-like domain occupies 24–80 (PDPSTKCVMECDTQEYRSICAADDKGSTKTYRNLCVMKTENCLQNANFQKISDKECP). 3 disulfides stabilise this stretch: Cys30/Cys65, Cys34/Cys58, and Cys43/Cys79.

In terms of assembly, interacts with wg; the interaction facilitates short-range diffusion of wg. Strongly expressed in the developing fly wing but is excluded from the presumptive wing margin.

The protein resides in the secreted. Increases short-range diffusion of the wingless/wg protein, enhancing its signaling and expression of target genes required for wing margin morphogenesis. May act as a serine protease inhibitor since it possess the Kazal serine protease inhibitor signature. The sequence is that of Protein pegasus from Drosophila melanogaster (Fruit fly).